We begin with the raw amino-acid sequence, 179 residues long: Natural killer cells antigen CD94 (179 aa).

The Cytoplasmic segment spans residues 1 to 10 (MAVFKTTLWR). A helical; Signal-anchor for type II membrane protein membrane pass occupies residues 11–31 (LISGTLGIICLSLMATLGILL). Topologically, residues 32-179 (KNSFTKLSIE…NRYICKQQLI (148 aa)) are extracellular. 2 cysteine pairs are disulfide-bonded: Cys58/Cys70 and Cys61/Cys72. A C-type lectin domain is found at 68–175 (YRCNCYFISS…CEDKNRYICK (108 aa)). Residues Asn83 and Asn132 are each glycosylated (N-linked (GlcNAc...) asparagine). 2 cysteine pairs are disulfide-bonded: Cys89–Cys174 and Cys152–Cys166.

As to quaternary structure, can form disulfide-bonded heterodimer with NKG2 family members KLRC1 and KLRC2. KLRD1-KLRC1 heterodimer interacts with peptide-bound MHC-E-B2M heterotrimeric complex. KLRD1 plays a prominent role in directly interacting with MHC-E. KLRD1-KLRC1 interacts with much higher affinity with peptide-bound MHC-E-B2M than KLRD1-KLRC2. Interacts with the adapter protein TYROBP/DAP12; this interaction is required for cell surface expression and cell activation. In terms of tissue distribution, natural killer cells.

It is found in the cell membrane. Functionally, immune receptor involved in self-nonself discrimination. In complex with KLRC1 or KLRC2 on cytotoxic and regulatory lymphocyte subsets, recognizes non-classical major histocompatibility (MHC) class Ib molecule MHC-E loaded with self-peptides derived from the signal sequence of classical MHC class Ia and non-classical MHC class Ib molecules. Enables cytotoxic cells to monitor the expression of MHC class I molecules in healthy cells and to tolerate self. Primarily functions as a ligand binding subunit as it lacks the capacity to signal. Its function is as follows. KLRD1-KLRC1 acts as an immune inhibitory receptor. Key inhibitory receptor on natural killer (NK) cells that regulates their activation and effector functions. Dominantly counteracts T cell receptor signaling on a subset of memory/effector CD8-positive T cells as part of an antigen-driven response to avoid autoimmunity. On intraepithelial CD8-positive gamma-delta regulatory T cells triggers TGFB1 secretion, which in turn limits the cytotoxic programming of intraepithelial CD8-positive alpha-beta T cells, distinguishing harmless from pathogenic antigens. In MHC-E-rich tumor microenvironment, acts as an immune inhibitory checkpoint and may contribute to progressive loss of effector functions of NK cells and tumor-specific T cells, a state known as cell exhaustion. Upon MHC-E-peptide binding, transmits intracellular signals through KLRC1 immunoreceptor tyrosine-based inhibition motifs (ITIMs) by recruiting INPP5D/SHIP-1 and INPPL1/SHIP-2 tyrosine phosphatases to ITIMs, and ultimately opposing signals transmitted by activating receptors through dephosphorylation of proximal signaling molecules. In terms of biological role, KLRD1-KLRC2 acts as an immune activating receptor. On cytotoxic lymphocyte subsets recognizes MHC-E loaded with signal sequence-derived peptides from non-classical MHC class Ib MHC-G molecules, likely playing a role in the generation and effector functions of adaptive NK cells and in maternal-fetal tolerance during pregnancy. Regulates the effector functions of terminally differentiated cytotoxic lymphocyte subsets, and in particular may play a role in adaptive NK cell response to viral infection. Upon MHC-E-peptide binding, transmits intracellular signals via the adapter protein TYROBP/DAP12, triggering the phosphorylation of proximal signaling molecules and cell activation. This is Natural killer cells antigen CD94 (KLRD1) from Pan troglodytes (Chimpanzee).